A 263-amino-acid polypeptide reads, in one-letter code: Thiamine thiazole synthase (263 aa).

NAD(+) is bound by residues Ser36, 55–56, Gly63, Val127, and 157–159; these read ER and HVD. Residues Asp159 and His174 each coordinate Fe cation. Met228 contributes to the NAD(+) binding site. Arg238 contributes to the glycine binding site.

This sequence belongs to the THI4 family. Homooctamer; tetramer of dimers. Fe(2+) serves as cofactor.

The catalysed reaction is hydrogen sulfide + glycine + NAD(+) = ADP-5-ethyl-4-methylthiazole-2-carboxylate + nicotinamide + 3 H2O + H(+). It participates in cofactor biosynthesis; thiamine diphosphate biosynthesis. In terms of biological role, involved in the biosynthesis of the thiazole moiety of thiamine. Catalyzes the conversion of NAD and glycine to adenosine diphosphate 5-(2-hydroxyethyl)-4-methylthiazole-2-carboxylate (ADT), an adenylated thiazole intermediate, using free sulfide as a source of sulfur. The polypeptide is Thiamine thiazole synthase (Solidesulfovibrio magneticus (strain ATCC 700980 / DSM 13731 / RS-1) (Desulfovibrio magneticus)).